Consider the following 319-residue polypeptide: Taste receptor type 2 member 30 (319 aa).

A topological domain (extracellular) is located at residue Met1. Residues 2 to 22 (ITFLPIIFSILIVVIFVIGNF) form a helical membrane-spanning segment. Topologically, residues 23–46 (ANGFIALVNSIEWVKRQKISFADQ) are cytoplasmic. Residues 47–67 (ILIALAVSRVGLLWALLLHWY) traverse the membrane as a helical segment. The Extracellular segment spans residues 68 to 86 (ATELNLAFYSVEVRITAYN). The chain crosses the membrane as a helical span at residues 87–107 (VWAVTNHFSNWLATSLSMFYL). Over 108–126 (LKIANFSNLIFLRIKRRVK) the chain is Cytoplasmic. The chain crosses the membrane as a helical span at residues 127–147 (SVILVILLGPLLFLVCHLFVI). Residues 148-178 (NMNEIVWTKEYEGNLTWKIKLRNAVFLSNMT) are Extracellular-facing. N-linked (GlcNAc...) asparagine glycosylation is found at Asn161 and Asn176. Residues 179 to 199 (LTMLANFVPLTLTLISFLLLI) traverse the membrane as a helical segment. Topologically, residues 200–229 (CSLCKHLKKMQLHGKGSQDPSTKVHIKALQ) are cytoplasmic. Residues 230 to 250 (TVTCFLLLCAIYFLSMIISVY) form a helical membrane-spanning segment. Topologically, residues 251-259 (NFGRLEKKP) are extracellular. A helical membrane pass occupies residues 260–280 (VFMFCQAITFSYPSTHAFILI). The Cytoplasmic segment spans residues 281 to 319 (WGNKKLKQIFLSVLWHVRYWVKDRSLRLHRFTRAALCKG).

Belongs to the G-protein coupled receptor T2R family.

The protein localises to the membrane. Receptor that may play a role in the perception of bitterness and is gustducin-linked. May play a role in sensing the chemical composition of the gastrointestinal content. The activity of this receptor may stimulate alpha gustducin, mediate PLC-beta-2 activation and lead to the gating of TRPM5. This chain is Taste receptor type 2 member 30 (TAS2R30), found in Pongo pygmaeus (Bornean orangutan).